A 566-amino-acid chain; its full sequence is Transcription factor atf1 (566 aa).

Residues 1 to 42 show a composition bias toward polar residues; the sequence is MSPSPVNTSTEPASVAAVSNGNATASSTQVPENNQSDSFAPP. 4 disordered regions span residues 1-83, 96-117, 315-345, and 357-479; these read MSPS…FVGS, SFGS…PSLS, QQQT…PQAS, and SQQF…KSFL. Over residues 43–53 the composition is skewed to low complexity; sequence SNNSQQNQQSS. Polar residues-rich tracts occupy residues 65 to 76 and 97 to 106; these read ANANPADQSDGV and FGSTASVGQG. The span at 107–117 shows a compositional bias: low complexity; it reads NPSLNRNPSLS. 2 stretches are compositionally biased toward polar residues: residues 379–412 and 421–460; these read TLRQ…TANS and TDYS…YSKG. Residues 466–479 show a composition bias toward basic and acidic residues; the sequence is SKNETDEEKRKSFL. The bZIP domain maps to 472 to 535; sequence EEKRKSFLER…VSLKTLLIAH (64 aa). A basic motif region spans residues 474–503; sequence KRKSFLERNRQAALKCRQRKKQWLSNLQAK. The segment at 514-528 is leucine-zipper; it reads LSAQVSALREEIVSL.

Belongs to the bZIP family. In terms of assembly, heterodimer of pcr1/mts2 and atf1/mts1. Post-translationally, phosphorylated by sty1/spc1.

It is found in the nucleus. Transcription factor required for sexual development and entry into stationary phase. Binds and activates CRE sites (cAMP-response elements, also known as M26 meiotic recombination hotspots). This chain is Transcription factor atf1 (atf1), found in Schizosaccharomyces pombe (strain 972 / ATCC 24843) (Fission yeast).